The primary structure comprises 266 residues: MGQKIHPTGFRLAVSRNWASRWYANNNNFAAMLQEDIGVREYLKKKLKNASVGRVVIERPAKNARITIYSSRPGVVIGKKGEDIEQLKTELQRRMGVPVHVNIEEIRKPETDAQLIADSITQQLERRIMFRRAMKRAMQNAMRLGAQGIKIMSAGRLNGIEIARTEWYREGRVPLHTLRADIDYATSEAKTTYGIIGVKVWVYKGDTLGRNDAPVVEEVAEDKRPRRNARPGDRRPRRDGEGGAPGARRGAPRRGAGKPEDGKTGE.

The 69-residue stretch at 39–107 (VREYLKKKLK…PVHVNIEEIR (69 aa)) folds into the KH type-2 domain. Residues 218 to 266 (EVAEDKRPRRNARPGDRRPRRDGEGGAPGARRGAPRRGAGKPEDGKTGE) are disordered. 2 stretches are compositionally biased toward basic and acidic residues: residues 230 to 241 (RPGDRRPRRDGE) and 257 to 266 (GKPEDGKTGE).

The protein belongs to the universal ribosomal protein uS3 family. As to quaternary structure, part of the 30S ribosomal subunit. Forms a tight complex with proteins S10 and S14.

Its function is as follows. Binds the lower part of the 30S subunit head. Binds mRNA in the 70S ribosome, positioning it for translation. This chain is Small ribosomal subunit protein uS3, found in Burkholderia ambifaria (strain MC40-6).